Consider the following 387-residue polypeptide: 4-hydroxy-3-methylbut-2-en-1-yl diphosphate synthase (flavodoxin) (387 aa).

Cys272, Cys275, Cys307, and Glu314 together coordinate [4Fe-4S] cluster.

It belongs to the IspG family. The cofactor is [4Fe-4S] cluster.

It carries out the reaction (2E)-4-hydroxy-3-methylbut-2-enyl diphosphate + oxidized [flavodoxin] + H2O + 2 H(+) = 2-C-methyl-D-erythritol 2,4-cyclic diphosphate + reduced [flavodoxin]. It functions in the pathway isoprenoid biosynthesis; isopentenyl diphosphate biosynthesis via DXP pathway; isopentenyl diphosphate from 1-deoxy-D-xylulose 5-phosphate: step 5/6. Functionally, converts 2C-methyl-D-erythritol 2,4-cyclodiphosphate (ME-2,4cPP) into 1-hydroxy-2-methyl-2-(E)-butenyl 4-diphosphate. This Granulibacter bethesdensis (strain ATCC BAA-1260 / CGDNIH1) protein is 4-hydroxy-3-methylbut-2-en-1-yl diphosphate synthase (flavodoxin).